Here is a 575-residue protein sequence, read N- to C-terminus: Urease subunit alpha (575 aa).

The 438-residue stretch at 138-575 folds into the Urease domain; sequence GAVDCHVHLI…LPMAQRYFLF (438 aa). Ni(2+) is bound by residues H143, H145, and K226. An N6-carboxylysine modification is found at K226. Position 228 (H228) interacts with substrate. 2 residues coordinate Ni(2+): H255 and H281. The active-site Proton donor is H329. Position 369 (D369) interacts with Ni(2+).

Belongs to the metallo-dependent hydrolases superfamily. Urease alpha subunit family. In terms of assembly, heterotrimer of UreA (gamma), UreB (beta) and UreC (alpha) subunits. Three heterotrimers associate to form the active enzyme. The cofactor is Ni cation. Carboxylation allows a single lysine to coordinate two nickel ions.

It is found in the cytoplasm. The enzyme catalyses urea + 2 H2O + H(+) = hydrogencarbonate + 2 NH4(+). Its pathway is nitrogen metabolism; urea degradation; CO(2) and NH(3) from urea (urease route): step 1/1. The chain is Urease subunit alpha from Frankia alni (strain DSM 45986 / CECT 9034 / ACN14a).